A 1525-amino-acid chain; its full sequence is MSSWLPQNVQKRLLIYLLQQISIFSQIDTTNLDVSLGCRSQFAFHDVELNVDHMRVPHITVESGHISELELGLVVSGGLDITGDGLCFVVRPELSEVAGSHDLAQSLARSIMDLTNSMMQPLPEVLEGDEVLANSCSEAGDAQQPASSSALDKMRNKVLERALSNLTVRIINVRIQVLFPGQQSITVLVGSVELSTVDKTRRVDLQDICISHSELVPSPEQPDEFMSTSASNSIYMSAIDSLPFGSRSKMEENARNVRALLQMDKLHVTFQGISSVEDISIRDLMLHMGRVDVFLDAIIAVDIGVFEVLVQFVAEFQQDTEVSETSNTLQNYKRFRQEQNLEEDLQITGFTIEELRITLSQSVKVSVIDIQLRNRYIENSTVTVGRVTICDYDLDLLHIDAGSKPCLELTVDSRKLQRIISVDGDIHMDISSTFVSSLIPLIFRLQELGRGLHFVGTNNCKMSQEFKTQVETKTIILSLPVGDDTLQMIIQPISYELSLHTVFTDFISISKVQSSETRDIAIIREIKIGYQTANFQVKSYNLKLSETLLTSKLRGSVSSVELYCSDSDIKWLFDGLSPYQDMITPYMHSKPEVRKPIMNKSVRILSASSVIHRQNVFSDMVLLIERITCSLSADSISSFGNVKTELNSSLLSLNTDNSIIFHSSCVKGSTVFSDVKYCLFEPIKTKDVTKPALFVQRFENGKLKVNVQNTCIYYHAKWLDILDESKGTKSTPQQESAVPVPLQQRIEVKFHDCALSMHPYRLKSALLICVNRCILDISVPPANFKCIIRSPTFMLADDCSNMKTSITESWESLVRYYSKAGFAVIGKSGLLSCTIKQSGGQICLDIDVDRIDLSICADSFQCLIQTLIDIKPPVSFPDEKKYRTEPCSIPVFENVDDEFFVPKGTSNLPALNDMHIVDDFINNSNNSFSEVQVIEETEEGSPLKLEDNGLLFDEGHFNKEDIPVATDSKFFPFGPVAIVLHLFVRKASIKLHDGYDWVYTRRSISKVVDDLEDEVHKQDQPGRVETSLFDSIYLYATPDSNIKKAVSSNIQSEDIIAENYSSKMKLRPSKHHKILIELTNMKLTFSGYSYDEPTEDIADWSTDLLNSIDVEVKTFEIVDNVATSTWNKFLTELKEAHGGSPSMLALSISLVRPIDFLYATELIISAQVSPLRLHVDQDTLDFLIRFSEFKDARFDLIDDYPDIVYIQRFEVNSIDVKLDYKPKKVDYVGLKSGHTSELMNFFTLDGAKMTLKRVVLYGVDGLGELHNCLSSIWTPDITRSQLSGVLKGVTPLKSIITLGSGVKALVTVPLKEYRQDQRLTRSLQKGARDFLKTTSGELIRLGVRMASGTQAILENTEEFFGGQGARARCMSARLPEDELSPVPSACDEFDLFRSSIPRKQSPIVPIPSEEDDIEPLKAISLYADQPQNAQKGVKEAYGSLGKNLTIAYGAVRRAQRDARHSISAQDAATAFARATPIAFIRPMIGATEAVSKTLQGISNQMDRDQLVHMRDKYKQSSHYQRKRER.

It belongs to the ATG2 family.

The protein resides in the preautophagosomal structure membrane. It localises to the endoplasmic reticulum membrane. The catalysed reaction is a 1,2-diacyl-sn-glycero-3-phosphocholine(in) = a 1,2-diacyl-sn-glycero-3-phosphocholine(out). The enzyme catalyses a 1,2-diacyl-sn-glycero-3-phospho-L-serine(in) = a 1,2-diacyl-sn-glycero-3-phospho-L-serine(out). It catalyses the reaction a 1,2-diacyl-sn-glycero-3-phosphoethanolamine(in) = a 1,2-diacyl-sn-glycero-3-phosphoethanolamine(out). Its function is as follows. Lipid transfer protein required for autophagosome completion and peroxisome degradation. Tethers the edge of the isolation membrane (IM) to the endoplasmic reticulum (ER) and mediates direct lipid transfer from ER to IM for IM expansion. ATG2 binds to the ER exit site (ERES), which is the membrane source for autophagosome formation, using basic residues in its N-terminal region (NR) and to the expanding edge of the IM through its C-terminal region. The latter binding is assisted by an ATG18-PtdIns3P interaction. ATG2 then extracts phospholipids from the membrane source using its NR and transfers them to ATG9 to the IM through its predicted beta-sheet-rich structure for membrane expansion. The chain is Autophagy-related protein 2 (ATG2) from Eremothecium gossypii (strain ATCC 10895 / CBS 109.51 / FGSC 9923 / NRRL Y-1056) (Yeast).